A 132-amino-acid chain; its full sequence is Fluoride-specific ion channel FluC (132 aa).

A run of 4 helical transmembrane segments spans residues 5-25 (LVAI…LGMW), 36-56 (GTLA…ALFA), 68-88 (FVVT…AEMF), and 103-123 (IAVH…TFGA). Positions 75 and 78 each coordinate Na(+).

This sequence belongs to the fluoride channel Fluc/FEX (TC 1.A.43) family.

It localises to the cell inner membrane. It catalyses the reaction fluoride(in) = fluoride(out). With respect to regulation, na(+) is not transported, but it plays an essential structural role and its presence is essential for fluoride channel function. Its function is as follows. Fluoride-specific ion channel. Important for reducing fluoride concentration in the cell, thus reducing its toxicity. The polypeptide is Fluoride-specific ion channel FluC (Chromohalobacter salexigens (strain ATCC BAA-138 / DSM 3043 / CIP 106854 / NCIMB 13768 / 1H11)).